A 493-amino-acid polypeptide reads, in one-letter code: Glutamyl-tRNA(Gln) amidotransferase subunit A (493 aa).

Catalysis depends on charge relay system residues K78 and S158. Catalysis depends on S182, which acts as the Acyl-ester intermediate.

Belongs to the amidase family. GatA subfamily. As to quaternary structure, heterotrimer of A, B and C subunits.

It carries out the reaction L-glutamyl-tRNA(Gln) + L-glutamine + ATP + H2O = L-glutaminyl-tRNA(Gln) + L-glutamate + ADP + phosphate + H(+). Allows the formation of correctly charged Gln-tRNA(Gln) through the transamidation of misacylated Glu-tRNA(Gln) in organisms which lack glutaminyl-tRNA synthetase. The reaction takes place in the presence of glutamine and ATP through an activated gamma-phospho-Glu-tRNA(Gln). The polypeptide is Glutamyl-tRNA(Gln) amidotransferase subunit A (Rickettsia typhi (strain ATCC VR-144 / Wilmington)).